A 109-amino-acid chain; its full sequence is Sperm-specific class P protein 9/11 (109 aa).

The region spanning 2–109 is the MSP domain; the sequence is SLTADPPACT…TVTIPMSATA (108 aa).

Expressed at higher level in testis.

The chain is Sperm-specific class P protein 9/11 (ssp-9) from Caenorhabditis elegans.